The chain runs to 30 residues: Varv peptide G (30 aa).

A cross-link (cyclopeptide (Gly-Asn)) is located at residues 1-30 (GVPVCGETCFGGTCNTPGCSCDPWPVCSRN). Disulfide bonds link Cys-5–Cys-19, Cys-9–Cys-21, and Cys-14–Cys-27.

Post-translationally, this is a cyclic peptide.

Probably participates in a plant defense mechanism. The polypeptide is Varv peptide G (Viola arvensis (European field pansy)).